A 192-amino-acid polypeptide reads, in one-letter code: Orotate phosphoribosyltransferase (192 aa).

Residue 116 to 124 (EDIVTTGLS) participates in 5-phospho-alpha-D-ribose 1-diphosphate binding. Orotate is bound by residues Thr120 and Arg148.

The protein belongs to the purine/pyrimidine phosphoribosyltransferase family. PyrE subfamily. In terms of assembly, homodimer. Mg(2+) is required as a cofactor.

The enzyme catalyses orotidine 5'-phosphate + diphosphate = orotate + 5-phospho-alpha-D-ribose 1-diphosphate. It participates in pyrimidine metabolism; UMP biosynthesis via de novo pathway; UMP from orotate: step 1/2. Catalyzes the transfer of a ribosyl phosphate group from 5-phosphoribose 1-diphosphate to orotate, leading to the formation of orotidine monophosphate (OMP). This Bartonella henselae (strain ATCC 49882 / DSM 28221 / CCUG 30454 / Houston 1) (Rochalimaea henselae) protein is Orotate phosphoribosyltransferase.